The following is a 611-amino-acid chain: 1,4-alpha-glucan branching enzyme GlgB (611 aa).

Residue Asp302 is the Nucleophile of the active site. Glu343 functions as the Proton donor in the catalytic mechanism.

This sequence belongs to the glycosyl hydrolase 13 family. GlgB subfamily. In terms of assembly, monomer.

It catalyses the reaction Transfers a segment of a (1-&gt;4)-alpha-D-glucan chain to a primary hydroxy group in a similar glucan chain.. The protein operates within glycan biosynthesis; glycogen biosynthesis. Catalyzes the formation of the alpha-1,6-glucosidic linkages in glycogen by scission of a 1,4-alpha-linked oligosaccharide from growing alpha-1,4-glucan chains and the subsequent attachment of the oligosaccharide to the alpha-1,6 position. The polypeptide is 1,4-alpha-glucan branching enzyme GlgB (Fusobacterium nucleatum subsp. nucleatum (strain ATCC 25586 / DSM 15643 / BCRC 10681 / CIP 101130 / JCM 8532 / KCTC 2640 / LMG 13131 / VPI 4355)).